Here is a 396-residue protein sequence, read N- to C-terminus: L-lactate dehydrogenase (396 aa).

Residues 1 to 380 (MIISAASDYR…SQDSLVQELD (380 aa)) enclose the FMN hydroxy acid dehydrogenase domain. Y24 is a binding site for substrate. 2 residues coordinate FMN: S106 and Q127. Y129 is a binding site for substrate. T155 contributes to the FMN binding site. R164 provides a ligand contact to substrate. Residue K251 participates in FMN binding. Residue H275 is the Proton acceptor of the active site. R278 is a binding site for substrate. An FMN-binding site is contributed by 306–330 (DSGIRNGLDVVRMIALGADTVLLGR).

Belongs to the FMN-dependent alpha-hydroxy acid dehydrogenase family. It depends on FMN as a cofactor.

Its subcellular location is the cell inner membrane. The enzyme catalyses (S)-lactate + A = pyruvate + AH2. Functionally, catalyzes the conversion of L-lactate to pyruvate. Is coupled to the respiratory chain. The sequence is that of L-lactate dehydrogenase from Escherichia fergusonii (strain ATCC 35469 / DSM 13698 / CCUG 18766 / IAM 14443 / JCM 21226 / LMG 7866 / NBRC 102419 / NCTC 12128 / CDC 0568-73).